A 157-amino-acid polypeptide reads, in one-letter code: MKIGLIVIGKTDAGYFVEAINEYKNRLTHYIPFEMEVIPDIKNVKNLSEAQQKEKEGELILKALQPGDYLVLLDEKGKEFTSMQFSTYLEKKMHTVPKRLVFVVGGPYGFSEAVYKAASEKISLSKMTFSHQMIRLIFIEQIYRAMTILNNEPYHHE.

S-adenosyl-L-methionine contacts are provided by residues Leu73, Gly105, and Leu124–Phe129.

Belongs to the RNA methyltransferase RlmH family. As to quaternary structure, homodimer.

It localises to the cytoplasm. It catalyses the reaction pseudouridine(1915) in 23S rRNA + S-adenosyl-L-methionine = N(3)-methylpseudouridine(1915) in 23S rRNA + S-adenosyl-L-homocysteine + H(+). In terms of biological role, specifically methylates the pseudouridine at position 1915 (m3Psi1915) in 23S rRNA. The chain is Ribosomal RNA large subunit methyltransferase H from Parabacteroides distasonis (strain ATCC 8503 / DSM 20701 / CIP 104284 / JCM 5825 / NCTC 11152).